A 385-amino-acid polypeptide reads, in one-letter code: D-alanine--D-alanine ligase (385 aa).

An ATP-grasp domain is found at 165–375 (KRVFTSFGLK…YPELVDRLVE (211 aa)). 201-256 (AGEHGWPLFVKPARAGSSIGITKVDDLAGLDEAVAEAQRHDPKIIVEALLRGREIE) is a binding site for ATP. Mg(2+) is bound by residues Asp329, Glu342, and Asn344.

Belongs to the D-alanine--D-alanine ligase family. Mg(2+) is required as a cofactor. It depends on Mn(2+) as a cofactor.

The protein localises to the cytoplasm. It carries out the reaction 2 D-alanine + ATP = D-alanyl-D-alanine + ADP + phosphate + H(+). It functions in the pathway cell wall biogenesis; peptidoglycan biosynthesis. Cell wall formation. The polypeptide is D-alanine--D-alanine ligase (Streptomyces avermitilis (strain ATCC 31267 / DSM 46492 / JCM 5070 / NBRC 14893 / NCIMB 12804 / NRRL 8165 / MA-4680)).